The chain runs to 339 residues: Heat stress transcription factor C-1a (339 aa).

Residues 154 to 217 are a coiled coil; that stretch reads EEEDAAEDVL…LAKLADDPNA (64 aa). The hydrophobic repeat HR-A/B stretch occupies residues 176-212; that stretch reads LRHEQTAIGEELARMSQRLQATERRPDQLMSFLAKLA. The tract at residues 227–248 is disordered; sequence AERKRRRQHLPSHEPTVCPLPP. Positions 229–233 match the Nuclear localization signal motif; that stretch reads RKRRR.

The protein belongs to the HSF family. Class C subfamily. In terms of assembly, homotrimer. Exhibits temperature-dependent phosphorylation.

It is found in the nucleus. In terms of biological role, transcriptional regulator that specifically binds DNA of heat shock promoter elements (HSE). This is Heat stress transcription factor C-1a (HSFC1A) from Oryza sativa subsp. japonica (Rice).